The primary structure comprises 452 residues: Transcription factor ETV6 (452 aa).

The segment covering 1–10 has biased composition (polar residues); it reads MSETPAQCSI. The segment at 1 to 30 is disordered; that stretch reads MSETPAQCSIKQERISYTPPESPVPSYASS. Lysine 11 bears the N6-acetyllysine; alternate mark. Residue lysine 11 forms a Glycyl lysine isopeptide (Lys-Gly) (interchain with G-Cter in SUMO2); alternate linkage. Threonine 18 carries the phosphothreonine modification. A Phosphoserine modification is found at serine 22. The PNT domain maps to 40–124; the sequence is ALRMEEDSIR…ELLQHILKQR (85 aa). Positions 158–262 are disordered; that stretch reads VQRTPRPSVD…PKPSSPRQES (105 aa). Serine 213 and serine 238 each carry phosphoserine. Polar residues predominate over residues 230–250; the sequence is QESYPLSVSPMENNHCPASSE. Serine 257 is modified (phosphoserine; by MAPK14). Lysine 288 participates in a covalent cross-link: Glycyl lysine isopeptide (Lys-Gly) (interchain with G-Cter in SUMO2). An N6-acetyllysine; alternate modification is found at lysine 302. Lysine 302 participates in a covalent cross-link: Glycyl lysine isopeptide (Lys-Gly) (interchain with G-Cter in SUMO2); alternate. Phosphoserine is present on serine 323. The ETS DNA-binding region spans 339–420; it reads RLLWDYVYQL…PGQRLLFRFM (82 aa). Residues lysine 403 and lysine 421 each participate in a glycyl lysine isopeptide (Lys-Gly) (interchain with G-Cter in SUMO2) cross-link.

Belongs to the ETS family. Can form homodimers or heterodimers with TEL2 or FLI1. Interacts with L3MBTL1 and HDAC9. In terms of processing, phosphorylation of Ser-257 by MAPK14 (p38) inhibits ETV6 transcriptional repression. As to expression, ubiquitous.

It localises to the nucleus. In terms of biological role, transcriptional repressor; binds to the DNA sequence 5'-CCGGAAGT-3'. Plays a role in hematopoiesis and malignant transformation. This Homo sapiens (Human) protein is Transcription factor ETV6 (ETV6).